The primary structure comprises 513 residues: General transcription and DNA repair factor IIH subunit TFB2 (513 aa).

A disordered region spans residues 296–319 (LRQNREEPSVNEDGANGKSTTDIT).

The protein belongs to the TFB2 family. As to quaternary structure, component of the 7-subunit TFIIH core complex composed of XPB/SSL2, XPD/RAD3, SSL1, TFB1, TFB2, TFB4 and TFB5, which is active in NER. The core complex associates with the 3-subunit CTD-kinase module TFIIK composed of CCL1, KIN28 and TFB3 to form the 10-subunit holoenzyme (holo-TFIIH) active in transcription. An additionnal subunit, TFB6, plays a role in the dissociation of the SSL2 helicase from TFIIH after transcription initiation. Interacts with TFB5.

The protein resides in the nucleus. Component of the general transcription and DNA repair factor IIH (TFIIH) core complex, which is involved in general and transcription-coupled nucleotide excision repair (NER) of damaged DNA and, when complexed to TFIIK, in RNA transcription by RNA polymerase II. In NER, TFIIH acts by opening DNA around the lesion to allow the excision of the damaged oligonucleotide and its replacement by a new DNA fragment. In transcription, TFIIH has an essential role in transcription initiation. When the pre-initiation complex (PIC) has been established, TFIIH is required for promoter opening and promoter escape. Phosphorylation of the C-terminal tail (CTD) of the largest subunit of RNA polymerase II by the kinase module TFIIK controls the initiation of transcription. The sequence is that of General transcription and DNA repair factor IIH subunit TFB2 (TFB2) from Saccharomyces cerevisiae (strain ATCC 204508 / S288c) (Baker's yeast).